Consider the following 393-residue polypeptide: MTNSNRIKLTWISFLSYALTGALVIVTGMVMGNIADYFHLPVSSMSNTFTFLNAGILISIFLNAWLMEIVPLKTQLRFGFILMVLAVAGLMFSHSLALFSAAMFVLGLVSGITMSIGTFLITQLYEGRQRGSRLLFTDSFFSMAGMIFPMVAAFLLARSIEWYWVYACIGLVYLAIFILTFGCEFPALGKHAQHSQAPVAKEKWGIGVLFLAVAALCYILGQLGFISWVPEYAKGLGMSLNDAGALVSDFWMSYMFGMWAFSFILRFFDLQRILTVLAGMAAVLMYLFITGTQAHMPWFILTLGFFSSAIYTSIITLGSQQTKVASPKLVNFILTCGTIGTMLTFVVTGPIVAHSGPQAALLTANGLYAVVFVMCFALGFVSRHRQHSAPATH.

12 consecutive transmembrane segments (helical) span residues 11–31, 51–71, 78–98, 101–121, 134–154, 162–182, 206–226, 245–265, 273–293, 298–318, 332–352, and 361–381; these read WISFLSYALTGALVIVTGMVM, FLNAGILISIFLNAWLMEIVP, FGFILMVLAVAGLMFSHSLAL, AAMFVLGLVSGITMSIGTFLI, LLFTDSFFSMAGMIFPMVAAF, WYWVYACIGLVYLAIFILTFG, IGVLFLAVAALCYILGQLGFI, ALVSDFWMSYMFGMWAFSFIL, ILTVLAGMAAVLMYLFITGTQ, WFILTLGFFSSAIYTSIITLG, FILTCGTIGTMLTFVVTGPIV, and LLTANGLYAVVFVMCFALGFV.

The protein belongs to the major facilitator superfamily. TsgA family.

It localises to the cell inner membrane. In Salmonella dublin (strain CT_02021853), this protein is Protein TsgA.